A 382-amino-acid chain; its full sequence is GDP-mannose transporter (382 aa).

Topologically, residues 1 to 40 (MADDKKTNEYTIEMDKLDHGNKDFEAPAPAVRPRGPPVAQ) are cytoplasmic. A helical membrane pass occupies residues 41 to 61 (LANNPILPVLAYCGSSILMTV). Residues 62–71 (MNKYVLSGRD) are Lumenal-facing. Residues 72–92 (FNLNFFLLCVQSIVCIVAIQT) traverse the membrane as a helical segment. Residues 93–110 (CKVSKLITYRDFNSDEAK) are Cytoplasmic-facing. A helical membrane pass occupies residues 111–127 (KWFPITLLLIGMIYTGS). The Lumenal portion of the chain corresponds to 128-134 (KALQYLS). The chain crosses the membrane as a helical span at residues 135-151 (IPVYTIFKNLTIILIAY). Topologically, residues 152–160 (GEVLWFGGS) are cytoplasmic. The chain crosses the membrane as a helical span at residues 161–182 (VTGLTLFSFGLMVLSSIIAAWA). The Lumenal portion of the chain corresponds to 183 to 200 (DIKHAVESSGDATAKVST). The chain crosses the membrane as a helical span at residues 201–221 (LNAGYIWMLINCLCTSSYVLG). The Cytoplasmic segment spans residues 222-233 (MRKRIKLTNFKD). The chain crosses the membrane as a helical span at residues 234-254 (FDTMFYNNLLSIPVLLVLTFL). The Lumenal portion of the chain corresponds to 255–274 (MEDWSSANIARNFPSTDRNG). A helical transmembrane segment spans residues 275–295 (ILFAMILSGLSSVFISYTSAW). At 296–303 (CVRVTSST) the chain is on the cytoplasmic side. The helical transmembrane segment at 304-324 (TYSMVGALNKLPIALSGLIFF) threads the bilayer. Residues 325–327 (DAP) lie on the Lumenal side of the membrane. A helical membrane pass occupies residues 328-348 (VTFPSVSAIVVGFISGIVYAV). The Cytoplasmic portion of the chain corresponds to 349 to 382 (AKIKQSAKPKTGVLPMSNPPVSASSQSMRDSLRS). The segment at 358–382 (KTGVLPMSNPPVSASSQSMRDSLRS) is disordered. Polar residues predominate over residues 367-382 (PPVSASSQSMRDSLRS).

This sequence belongs to the TPT transporter family. SLC35D subfamily. As to quaternary structure, homooligomer.

The protein resides in the golgi apparatus membrane. It localises to the cytoplasmic vesicle membrane. The protein localises to the endoplasmic reticulum membrane. Functionally, involved in the import of GDP-mannose from the cytoplasm into the Golgi lumen. The sequence is that of GDP-mannose transporter (gmt1) from Aspergillus fumigatus (strain CBS 144.89 / FGSC A1163 / CEA10) (Neosartorya fumigata).